Consider the following 434-residue polypeptide: Neuropeptide receptor 22 (434 aa).

Over methionine 1–leucine 55 the chain is Extracellular. A helical transmembrane segment spans residues phenylalanine 56 to valine 76. The Cytoplasmic segment spans residues tyrosine 77 to asparagine 86. A helical transmembrane segment spans residues isoleucine 87 to serine 107. Residues tyrosine 108–leucine 128 are Extracellular-facing. A disulfide bridge links cysteine 126 with cysteine 204. Residues leucine 129–phenylalanine 149 form a helical membrane-spanning segment. The Cytoplasmic segment spans residues aspartate 150–arginine 169. A helical membrane pass occupies residues alanine 170 to phenylalanine 190. Over threonine 191–valine 226 the chain is Extracellular. A glycan (N-linked (GlcNAc...) asparagine) is linked at asparagine 207. The chain crosses the membrane as a helical span at residues leucine 227–isoleucine 247. At lysine 248 to valine 277 the chain is on the cytoplasmic side. The chain crosses the membrane as a helical span at residues proline 278–isoleucine 298. The Extracellular portion of the chain corresponds to asparagine 299–serine 310. The helical transmembrane segment at tryptophan 311–valine 331 threads the bilayer. Topologically, residues asparagine 332 to alanine 434 are cytoplasmic.

Belongs to the G-protein coupled receptor 1 family. As to expression, expressed in many cells, mainly in the head region, with expression detected in the head muscles, I2 neurons, MC neurons, RIH neuron, AIA neurons, AUA neurons, ASK neurons, ASI neurons, a few B-type motorneurons in the posterior ventral nerve cord, pharyngeal muscles, body wall muscles, the intestine and a few classes of unidentified cells anterior to the nerve ring. Expression in the MC neurons is important to mediate suppression of feeding while expression in the RIH neuron is important for the facilitation of egg-laying. No expression detected in other tissues including hypodermis.

The protein localises to the cell membrane. Functionally, receptor for the LURY-1-1 and LURY-1-2 peptides which control food-related processes including feeding, lifespan, egg-laying and roaming behavior. Receptor for flp-7 which stimulates serotonin-induced fat loss. Serotonin induces secretion of flp-7 from neurons and binding to npr-22 which leads to induction of the atgp-1 lipase and subsequent fat loss. Acts in vitro as a receptor for the flp-7 FMRFamide-like neuropeptides TPMQRSSMVRF-amide, SPMQRSSMVRF-amide, SPMERSAMVRF-amide and SPMDRSKMVRF-amide. Also acts in vitro as a receptor for a number of other FMRFamide-like neuropeptides including the flp-1 neuropeptide PNFMRY-amide, the flp-9 neuropeptide KPSFVRF-amide, the flp-11 neuropeptides AMRNALVRF-amide, ASGGMRNALVRF-amide and NGAPQPFVRF-amide, the flp-13 neuropeptides AADGAPLIRF-amide, ASPSAPLIRF-amide, SPSAVPLIRF-amide, SAAAPLIRF-amide and ASSAPLIRF-amide, and the flp-22 neuropeptide SPSAKWMRF-amide. The SPMERSAMVRF-amide neuropeptide from flp-7 acts as the strongest in vitro activator of npr-22. This Caenorhabditis elegans protein is Neuropeptide receptor 22.